The sequence spans 235 residues: Exosome complex component RRP46 (235 aa).

Residues 1–21 (MEGAKRADANLLTDTGTESSP) form a disordered region. Residues 12–21 (LTDTGTESSP) are compositionally biased toward polar residues. A phosphoserine mark is found at Ser20 and Ser23.

It belongs to the RNase PH family. In terms of assembly, homodimer. Component of the RNA exosome core complex (Exo-9), composed of EXOSC1, EXOSC2, EXOSC3, EXOSC4, EXOSC5, EXOSC6, EXOSC7, EXOSC8 and EXOSC9; within the complex interacts with EXOSC3, EXOSC8, and EXOSC9. The catalytically inactive RNA exosome core complex (Exo-9) associates with the catalytic subunit EXOSC10/RRP6. Exo-9 may associate with DIS3 to form the nucleolar exosome complex, or DIS3L to form the cytoplasmic exosome complex. Exo-9 is formed by a hexameric base ring consisting of the heterodimers EXOSC4-EXOSC9, EXOSC5-EXOSC8 and EXOSC6-EXOSC7, and a cap ring consisting of EXOSC1, EXOSC2 and EXOSC3. The RNA exosome complex associates with cofactors C1D/RRP47, MPHOSPH6/MPP6 and MTREX/MTR4. Interacts with GTPBP1. Interacts with ZC3HAV1. Interacts with DDX17 only in the presence of ZC3HAV1 in an RNA-independent manner.

The protein localises to the nucleus. Its subcellular location is the nucleolus. The protein resides in the cytoplasm. Non-catalytic component of the RNA exosome complex which has 3'-&gt;5' exoribonuclease activity and participates in a multitude of cellular RNA processing and degradation events. In the nucleus, the RNA exosome complex is involved in proper maturation of stable RNA species such as rRNA, snRNA and snoRNA, in the elimination of RNA processing by-products and non-coding 'pervasive' transcripts, such as antisense RNA species and promoter-upstream transcripts (PROMPTs), and of mRNAs with processing defects, thereby limiting or excluding their export to the cytoplasm. The RNA exosome may be involved in Ig class switch recombination (CSR) and/or Ig variable region somatic hypermutation (SHM) by targeting AICDA deamination activity to transcribed dsDNA substrates. In the cytoplasm, the RNA exosome complex is involved in general mRNA turnover and specifically degrades inherently unstable mRNAs containing AU-rich elements (AREs) within their 3' untranslated regions, and in RNA surveillance pathways, preventing translation of aberrant mRNAs. It seems to be involved in degradation of histone mRNA. The catalytic inactive RNA exosome core complex of 9 subunits (Exo-9) is proposed to play a pivotal role in the binding and presentation of RNA for ribonucleolysis, and to serve as a scaffold for the association with catalytic subunits and accessory proteins or complexes. In vitro, EXOSC5 does not bind or digest single-stranded RNA and binds to double-stranded DNA without detectable DNase activity. This chain is Exosome complex component RRP46 (Exosc5), found in Mus musculus (Mouse).